A 215-amino-acid polypeptide reads, in one-letter code: Ribose-5-phosphate isomerase A (215 aa).

Substrate is bound by residues 26–29 (TGST), 79–82 (DGAD), and 92–95 (KGGG). Residue Glu101 is the Proton acceptor of the active site. Position 119 (Lys119) interacts with substrate.

The protein belongs to the ribose 5-phosphate isomerase family. As to quaternary structure, homodimer.

It catalyses the reaction aldehydo-D-ribose 5-phosphate = D-ribulose 5-phosphate. Its pathway is carbohydrate degradation; pentose phosphate pathway; D-ribose 5-phosphate from D-ribulose 5-phosphate (non-oxidative stage): step 1/1. Catalyzes the reversible conversion of ribose-5-phosphate to ribulose 5-phosphate. The sequence is that of Ribose-5-phosphate isomerase A from Xanthomonas euvesicatoria pv. vesicatoria (strain 85-10) (Xanthomonas campestris pv. vesicatoria).